The chain runs to 129 residues: Phosphoribosyl-AMP cyclohydrolase (129 aa).

Residue Asp-79 coordinates Mg(2+). Zn(2+) is bound at residue Cys-80. Mg(2+) is bound by residues Asp-81 and Asp-83. Zn(2+)-binding residues include Cys-96 and Cys-103.

The protein belongs to the PRA-CH family. As to quaternary structure, homodimer. Requires Mg(2+) as cofactor. Zn(2+) is required as a cofactor.

The protein localises to the cytoplasm. The enzyme catalyses 1-(5-phospho-beta-D-ribosyl)-5'-AMP + H2O = 1-(5-phospho-beta-D-ribosyl)-5-[(5-phospho-beta-D-ribosylamino)methylideneamino]imidazole-4-carboxamide. It participates in amino-acid biosynthesis; L-histidine biosynthesis; L-histidine from 5-phospho-alpha-D-ribose 1-diphosphate: step 3/9. Catalyzes the hydrolysis of the adenine ring of phosphoribosyl-AMP. This Magnetococcus marinus (strain ATCC BAA-1437 / JCM 17883 / MC-1) protein is Phosphoribosyl-AMP cyclohydrolase.